We begin with the raw amino-acid sequence, 319 residues long: Phosphoenolpyruvate transferase (319 aa).

Aspartate 50 serves as a coordination point for 7,8-didemethyl-8-hydroxy-5-deazariboflavin.

This sequence belongs to the CofD family. Homodimer. Requires Mg(2+) as cofactor.

The catalysed reaction is enolpyruvoyl-2-diphospho-5'-guanosine + 7,8-didemethyl-8-hydroxy-5-deazariboflavin = dehydro coenzyme F420-0 + GMP + H(+). It participates in cofactor biosynthesis; coenzyme F420 biosynthesis. Its function is as follows. Catalyzes the transfer of the phosphoenolpyruvate moiety from enoylpyruvoyl-2-diphospho-5'-guanosine (EPPG) to 7,8-didemethyl-8-hydroxy-5-deazariboflavin (FO) with the formation of dehydro coenzyme F420-0 and GMP. This is Phosphoenolpyruvate transferase from Streptomyces coelicolor (strain ATCC BAA-471 / A3(2) / M145).